The sequence spans 290 residues: Glutamyl-Q tRNA(Asp) synthetase (290 aa).

L-glutamate contacts are provided by residues Arg9–Ser13 and Glu45. Positions Pro12–Ser22 match the 'HIGH' region motif. Positions 101, 103, 115, and 119 each coordinate Zn(2+). L-glutamate is bound by residues Tyr170 and Arg188. Positions Lys226 to Gln230 match the 'KMSKS' region motif. ATP is bound at residue Lys229.

This sequence belongs to the class-I aminoacyl-tRNA synthetase family. GluQ subfamily. Zn(2+) is required as a cofactor.

Its function is as follows. Catalyzes the tRNA-independent activation of glutamate in presence of ATP and the subsequent transfer of glutamate onto a tRNA(Asp). Glutamate is transferred on the 2-amino-5-(4,5-dihydroxy-2-cyclopenten-1-yl) moiety of the queuosine in the wobble position of the QUC anticodon. In Shewanella amazonensis (strain ATCC BAA-1098 / SB2B), this protein is Glutamyl-Q tRNA(Asp) synthetase.